The sequence spans 209 residues: FMN-dependent NADH:quinone oxidoreductase 2 (209 aa).

Residues Ser-9, Ser-15–Ser-17, and Met-97–Phe-100 contribute to the FMN site.

This sequence belongs to the azoreductase type 1 family. As to quaternary structure, homodimer. It depends on FMN as a cofactor.

The enzyme catalyses 2 a quinone + NADH + H(+) = 2 a 1,4-benzosemiquinone + NAD(+). It carries out the reaction N,N-dimethyl-1,4-phenylenediamine + anthranilate + 2 NAD(+) = 2-(4-dimethylaminophenyl)diazenylbenzoate + 2 NADH + 2 H(+). Quinone reductase that provides resistance to thiol-specific stress caused by electrophilic quinones. Its function is as follows. Also exhibits azoreductase activity. Catalyzes the reductive cleavage of the azo bond in aromatic azo compounds to the corresponding amines. The chain is FMN-dependent NADH:quinone oxidoreductase 2 from Pseudomonas syringae pv. tomato (strain ATCC BAA-871 / DC3000).